The sequence spans 256 residues: Homeobox protein Hox-D13a (256 aa).

The homeobox DNA-binding region spans 191–250 (GRKKRVPYTKFQLKELEREYNTTKFITKENRRRIASSTNLSERQVTIWFQNRRVKDKKRP).

Belongs to the Abd-B homeobox family.

It localises to the nucleus. Functionally, sequence-specific transcription factor which is part of a developmental regulatory system that provides cells with specific positional identities on the anterior-posterior axis. The sequence is that of Homeobox protein Hox-D13a (hoxd13a) from Danio rerio (Zebrafish).